The chain runs to 353 residues: Aromatic amino acid aminotransferase (353 aa).

Lysine 217 carries the post-translational modification N6-(pyridoxal phosphate)lysine.

Belongs to the class-II pyridoxal-phosphate-dependent aminotransferase family. Homodimer. Pyridoxal 5'-phosphate serves as cofactor.

It carries out the reaction an aromatic L-alpha-amino acid + 2-oxoglutarate = an aromatic oxo-acid + L-glutamate. Aminotransferase that catalyzes the conversion of aromatic amino acids and 2-oxoglutarate into corresponding aromatic oxo acids and L-glutamate. This Mycobacterium tuberculosis (strain ATCC 25177 / H37Ra) protein is Aromatic amino acid aminotransferase.